A 176-amino-acid polypeptide reads, in one-letter code: Prepronociceptin (176 aa).

Positions 1 to 19 are cleaved as a signal peptide; that stretch reads MKVLLCDLLLLSLFSSVFS. Propeptides lie at residues 20-95 and 169-176; these read SCQR…MQHL and TLHQNGNV.

This sequence belongs to the opioid neuropeptide precursor family. Specific enzymatic cleavages at paired basic residues probably yield other active peptides besides nociceptin. In terms of processing, the N-terminal domain contains 6 conserved cysteines thought to be involved in disulfide bonding and/or processing. Predominantly expressed in the brain and spinal cord. Also expressed and secreted by peripheral blood neutrophils following degranulation.

The protein localises to the secreted. Functionally, ligand of the opioid receptor-like receptor OPRL1. It may act as a transmitter in the brain by modulating nociceptive and locomotor behavior. May be involved in neuronal differentiation and development. In terms of biological role, blocks nociceptin action in pain transmission by inhibiting nociceptin-induced hyperalgesia and allodynia. Its function is as follows. Has potent analgesic activity. This Homo sapiens (Human) protein is Prepronociceptin (PNOC).